We begin with the raw amino-acid sequence, 326 residues long: Transmembrane protein 171 (326 aa).

A run of 4 helical transmembrane segments spans residues Ile22–Phe42, Met57–Ala77, Leu114–Val134, and Phe161–Val181. The tract at residues Phe229–Pro326 is disordered. Positions Pro230 to Ser240 are enriched in low complexity. Residues Ser257 to Pro266 show a composition bias toward polar residues. Composition is skewed to low complexity over residues Ser288–Leu302 and Ala312–Pro326.

The protein resides in the membrane. The sequence is that of Transmembrane protein 171 (TMEM171) from Bos taurus (Bovine).